Here is a 560-residue protein sequence, read N- to C-terminus: Dihydroxy-acid dehydratase (560 aa).

The interval 1–20 (MGDNLKKRSSMTTDGDNRAP) is disordered. Residue Cys-52 participates in [2Fe-2S] cluster binding. Asp-84 is a binding site for Mg(2+). Cys-125 is a [2Fe-2S] cluster binding site. Asp-126 and Lys-127 together coordinate Mg(2+). Lys-127 bears the N6-carboxylysine mark. Residue Cys-197 coordinates [2Fe-2S] cluster. Glu-448 is a Mg(2+) binding site. Catalysis depends on Ser-474, which acts as the Proton acceptor.

Belongs to the IlvD/Edd family. Homodimer. It depends on [2Fe-2S] cluster as a cofactor. The cofactor is Mg(2+).

It carries out the reaction (2R)-2,3-dihydroxy-3-methylbutanoate = 3-methyl-2-oxobutanoate + H2O. The enzyme catalyses (2R,3R)-2,3-dihydroxy-3-methylpentanoate = (S)-3-methyl-2-oxopentanoate + H2O. It functions in the pathway amino-acid biosynthesis; L-isoleucine biosynthesis; L-isoleucine from 2-oxobutanoate: step 3/4. Its pathway is amino-acid biosynthesis; L-valine biosynthesis; L-valine from pyruvate: step 3/4. Its function is as follows. Functions in the biosynthesis of branched-chain amino acids. Catalyzes the dehydration of (2R,3R)-2,3-dihydroxy-3-methylpentanoate (2,3-dihydroxy-3-methylvalerate) into 2-oxo-3-methylpentanoate (2-oxo-3-methylvalerate) and of (2R)-2,3-dihydroxy-3-methylbutanoate (2,3-dihydroxyisovalerate) into 2-oxo-3-methylbutanoate (2-oxoisovalerate), the penultimate precursor to L-isoleucine and L-valine, respectively. This is Dihydroxy-acid dehydratase from Leptospira interrogans serogroup Icterohaemorrhagiae serovar copenhageni (strain Fiocruz L1-130).